We begin with the raw amino-acid sequence, 350 residues long: DNA polymerase IV (350 aa).

In terms of domain architecture, UmuC spans 4–185 (IIHIDMDCFY…LPLGKLPGIG (182 aa)). Residues Asp-8 and Asp-103 each contribute to the Mg(2+) site. The active site involves Glu-104.

This sequence belongs to the DNA polymerase type-Y family. In terms of assembly, monomer. Mg(2+) is required as a cofactor.

The protein localises to the cytoplasm. It catalyses the reaction DNA(n) + a 2'-deoxyribonucleoside 5'-triphosphate = DNA(n+1) + diphosphate. Its function is as follows. Poorly processive, error-prone DNA polymerase involved in untargeted mutagenesis. Copies undamaged DNA at stalled replication forks, which arise in vivo from mismatched or misaligned primer ends. These misaligned primers can be extended by PolIV. Exhibits no 3'-5' exonuclease (proofreading) activity. May be involved in translesional synthesis, in conjunction with the beta clamp from PolIII. The sequence is that of DNA polymerase IV from Aeromonas hydrophila subsp. hydrophila (strain ATCC 7966 / DSM 30187 / BCRC 13018 / CCUG 14551 / JCM 1027 / KCTC 2358 / NCIMB 9240 / NCTC 8049).